Consider the following 484-residue polypeptide: MKFIIKLFPEIMIKSDSVRKRFIKILTGNIRNILDKHDDSVAVVRHWDFIEVRSKHEENRPHLIELLQCIPGIHHFLEVEERPFTDLHNIFEQTLERMRDELVDKTFCVRAKRRGKHSFSSLEIERYVGGGLNQHIETAKVKLKNPDVTVRIEVDNDKLLFIQARHEGIGGYPIGTQEDVLSLISGGFDSGVSSYMLIRRGSRVHYCFFNLGGAAHEIGVKQMVYHLWNRYGSSHKVRFIAINFEAVVGEILEKIDNGQMGVVLKRMMVRAAGKVAQRFAIEAIVTGEALGQVSSQTLTNLRLIDEAAGTLVLRPLITHDKEQIIAMAKQIGTEDIAKSMPEFCGVISKNPTVKAVRERILAEEEHFDFDILESAVQNAEYLDIRQIAEETAKGVVEIDGVSVLGENDVILDIRSPEETDENPLALENRQVIELPFYKVSSQFGELDQSKNYVLYCERGVMSKLQALYLKENGFNNVQVFVKAK.

Residues 61–166 (PHLIELLQCI…DKLLFIQARH (106 aa)) form the THUMP domain. ATP is bound by residues 183 to 184 (LI), lysine 265, glycine 287, and glutamine 296. Cysteine 344 and cysteine 456 form a disulfide bridge. Residues 404-483 (LGENDVILDI…FNNVQVFVKA (80 aa)) form the Rhodanese domain. The active-site Cysteine persulfide intermediate is cysteine 456.

The protein belongs to the ThiI family.

The protein resides in the cytoplasm. The enzyme catalyses [ThiI sulfur-carrier protein]-S-sulfanyl-L-cysteine + a uridine in tRNA + 2 reduced [2Fe-2S]-[ferredoxin] + ATP + H(+) = [ThiI sulfur-carrier protein]-L-cysteine + a 4-thiouridine in tRNA + 2 oxidized [2Fe-2S]-[ferredoxin] + AMP + diphosphate. The catalysed reaction is [ThiS sulfur-carrier protein]-C-terminal Gly-Gly-AMP + S-sulfanyl-L-cysteinyl-[cysteine desulfurase] + AH2 = [ThiS sulfur-carrier protein]-C-terminal-Gly-aminoethanethioate + L-cysteinyl-[cysteine desulfurase] + A + AMP + 2 H(+). The protein operates within cofactor biosynthesis; thiamine diphosphate biosynthesis. In terms of biological role, catalyzes the ATP-dependent transfer of a sulfur to tRNA to produce 4-thiouridine in position 8 of tRNAs, which functions as a near-UV photosensor. Also catalyzes the transfer of sulfur to the sulfur carrier protein ThiS, forming ThiS-thiocarboxylate. This is a step in the synthesis of thiazole, in the thiamine biosynthesis pathway. The sulfur is donated as persulfide by IscS. This Actinobacillus succinogenes (strain ATCC 55618 / DSM 22257 / CCUG 43843 / 130Z) protein is tRNA sulfurtransferase.